We begin with the raw amino-acid sequence, 387 residues long: Succinate--CoA ligase [ADP-forming] subunit beta (387 aa).

An ATP-grasp domain is found at 9–245 (KDLLESYGLK…KSQENAKELK (237 aa)). ATP is bound by residues Lys-46, 53-55 (GRG), Glu-100, Tyr-103, and Glu-108. Residues Asn-200 and Asp-214 each contribute to the Mg(2+) site. Substrate-binding positions include Asn-265 and 322-324 (GIV).

This sequence belongs to the succinate/malate CoA ligase beta subunit family. Heterotetramer of two alpha and two beta subunits. Requires Mg(2+) as cofactor.

It catalyses the reaction succinate + ATP + CoA = succinyl-CoA + ADP + phosphate. It carries out the reaction GTP + succinate + CoA = succinyl-CoA + GDP + phosphate. It functions in the pathway carbohydrate metabolism; tricarboxylic acid cycle; succinate from succinyl-CoA (ligase route): step 1/1. Its function is as follows. Succinyl-CoA synthetase functions in the citric acid cycle (TCA), coupling the hydrolysis of succinyl-CoA to the synthesis of either ATP or GTP and thus represents the only step of substrate-level phosphorylation in the TCA. The beta subunit provides nucleotide specificity of the enzyme and binds the substrate succinate, while the binding sites for coenzyme A and phosphate are found in the alpha subunit. This chain is Succinate--CoA ligase [ADP-forming] subunit beta, found in Francisella tularensis subsp. mediasiatica (strain FSC147).